A 155-amino-acid chain; its full sequence is 6,7-dimethyl-8-ribityllumazine synthase (155 aa).

5-amino-6-(D-ribitylamino)uracil is bound by residues F23, 57-59 (AFE), and 81-83 (AVI). Residue 86 to 87 (AT) participates in (2S)-2-hydroxy-3-oxobutyl phosphate binding. Residue H89 is the Proton donor of the active site. F114 is a 5-amino-6-(D-ribitylamino)uracil binding site. Residue R128 participates in (2S)-2-hydroxy-3-oxobutyl phosphate binding.

Belongs to the DMRL synthase family.

It catalyses the reaction (2S)-2-hydroxy-3-oxobutyl phosphate + 5-amino-6-(D-ribitylamino)uracil = 6,7-dimethyl-8-(1-D-ribityl)lumazine + phosphate + 2 H2O + H(+). Its pathway is cofactor biosynthesis; riboflavin biosynthesis; riboflavin from 2-hydroxy-3-oxobutyl phosphate and 5-amino-6-(D-ribitylamino)uracil: step 1/2. Catalyzes the formation of 6,7-dimethyl-8-ribityllumazine by condensation of 5-amino-6-(D-ribitylamino)uracil with 3,4-dihydroxy-2-butanone 4-phosphate. This is the penultimate step in the biosynthesis of riboflavin. This is 6,7-dimethyl-8-ribityllumazine synthase from Geotalea daltonii (strain DSM 22248 / JCM 15807 / FRC-32) (Geobacter daltonii).